Here is a 437-residue protein sequence, read N- to C-terminus: Cobyrinate a,c-diamide synthase (437 aa).

The GATase cobBQ-type domain maps to 241–430 (KIAVAKDEAF…AHVHFFGNLD (190 aa)). Catalysis depends on Cys323, which acts as the Nucleophile.

This sequence belongs to the CobB/CbiA family. Requires Mg(2+) as cofactor.

The catalysed reaction is cob(II)yrinate + 2 L-glutamine + 2 ATP + 2 H2O = cob(II)yrinate a,c diamide + 2 L-glutamate + 2 ADP + 2 phosphate + 2 H(+). The protein operates within cofactor biosynthesis; adenosylcobalamin biosynthesis; cob(II)yrinate a,c-diamide from sirohydrochlorin (anaerobic route): step 10/10. Catalyzes the ATP-dependent amidation of the two carboxylate groups at positions a and c of cobyrinate, using either L-glutamine or ammonia as the nitrogen source. This is Cobyrinate a,c-diamide synthase from Clostridium acetobutylicum (strain ATCC 824 / DSM 792 / JCM 1419 / IAM 19013 / LMG 5710 / NBRC 13948 / NRRL B-527 / VKM B-1787 / 2291 / W).